The sequence spans 333 residues: Aquaporin-1 (333 aa).

The segment at 1–26 (MQKMSEKPLYRAAENPTRNADRRAGR) is disordered. The next 2 membrane-spanning stretches (helical) occupy residues 85 to 105 (LAMFLFMSLLLGGAATAHFTG) and 116 to 136 (FHGFSAVFGIYVGAGVSGGII). An NPA 1 motif is present at residues 137 to 139 (NPA). A run of 3 helical transmembrane segments spans residues 156–176 (LVLVSAQYFGSFIASAVVYLI), 213–233 (TGAIFNQIFCTMLLSIGFLSI), and 245–265 (LFPFAVGLLIMTVFLAFSYSA). Residues 270-272 (NPA) carry the NPA 2 motif. The helical transmembrane segment at 303–323 (WLFPYVGALFGAVMYQIFVGV) threads the bilayer.

This sequence belongs to the MIP/aquaporin (TC 1.A.8) family.

Its subcellular location is the cell membrane. In terms of biological role, aquaglyceroporin that may modulate the water content and osmolytes during anhydrobiosis. The sequence is that of Aquaporin-1 from Milnesium tardigradum (Water bear).